A 122-amino-acid chain; its full sequence is Large ribosomal subunit protein uL14 (122 aa).

This sequence belongs to the universal ribosomal protein uL14 family. Part of the 50S ribosomal subunit. Forms a cluster with proteins L3 and L19. In the 70S ribosome, L14 and L19 interact and together make contacts with the 16S rRNA in bridges B5 and B8.

Functionally, binds to 23S rRNA. Forms part of two intersubunit bridges in the 70S ribosome. The protein is Large ribosomal subunit protein uL14 of Clostridium perfringens (strain ATCC 13124 / DSM 756 / JCM 1290 / NCIMB 6125 / NCTC 8237 / Type A).